A 268-amino-acid chain; its full sequence is Tryptophan synthase alpha chain (268 aa).

Residues Glu-49 and Asp-60 each act as proton acceptor in the active site.

This sequence belongs to the TrpA family. In terms of assembly, tetramer of two alpha and two beta chains.

It carries out the reaction (1S,2R)-1-C-(indol-3-yl)glycerol 3-phosphate + L-serine = D-glyceraldehyde 3-phosphate + L-tryptophan + H2O. Its pathway is amino-acid biosynthesis; L-tryptophan biosynthesis; L-tryptophan from chorismate: step 5/5. In terms of biological role, the alpha subunit is responsible for the aldol cleavage of indoleglycerol phosphate to indole and glyceraldehyde 3-phosphate. The sequence is that of Tryptophan synthase alpha chain from Salmonella agona (strain SL483).